The primary structure comprises 357 residues: Glutamine synthetase root isozyme 1 (357 aa).

One can recognise a GS beta-grasp domain in the interval 19-99 (IIAEYIWIGG…VMCDCYTPQG (81 aa)). A GS catalytic domain is found at 106 to 357 (KRYSAAKVFS…AETTILWNGN (252 aa)).

Belongs to the glutamine synthetase family. Homooctamer. In terms of tissue distribution, found mainly in the cortical tissues of seedling roots, and in the root tip.

The protein resides in the cytoplasm. The enzyme catalyses L-glutamate + NH4(+) + ATP = L-glutamine + ADP + phosphate + H(+). In terms of biological role, plays a role in the flow of nitrogen into nitrogenous organic compounds. This is Glutamine synthetase root isozyme 1 (GLN6) from Zea mays (Maize).